The following is a 485-amino-acid chain: Aspartyl/glutamyl-tRNA(Asn/Gln) amidotransferase subunit B (485 aa).

This sequence belongs to the GatB/GatE family. GatB subfamily. In terms of assembly, heterotrimer of A, B and C subunits.

The enzyme catalyses L-glutamyl-tRNA(Gln) + L-glutamine + ATP + H2O = L-glutaminyl-tRNA(Gln) + L-glutamate + ADP + phosphate + H(+). It carries out the reaction L-aspartyl-tRNA(Asn) + L-glutamine + ATP + H2O = L-asparaginyl-tRNA(Asn) + L-glutamate + ADP + phosphate + 2 H(+). Allows the formation of correctly charged Asn-tRNA(Asn) or Gln-tRNA(Gln) through the transamidation of misacylated Asp-tRNA(Asn) or Glu-tRNA(Gln) in organisms which lack either or both of asparaginyl-tRNA or glutaminyl-tRNA synthetases. The reaction takes place in the presence of glutamine and ATP through an activated phospho-Asp-tRNA(Asn) or phospho-Glu-tRNA(Gln). This is Aspartyl/glutamyl-tRNA(Asn/Gln) amidotransferase subunit B from Bordetella avium (strain 197N).